The primary structure comprises 612 residues: Elongation factor 4 (612 aa).

The tr-type G domain maps to 11–193 (NHIRNFSIVA…KIVTDIPAPS (183 aa)). GTP-binding positions include 23 to 28 (DHGKST) and 140 to 143 (NKID).

Belongs to the TRAFAC class translation factor GTPase superfamily. Classic translation factor GTPase family. LepA subfamily.

The protein resides in the cell membrane. The enzyme catalyses GTP + H2O = GDP + phosphate + H(+). Its function is as follows. Required for accurate and efficient protein synthesis under certain stress conditions. May act as a fidelity factor of the translation reaction, by catalyzing a one-codon backward translocation of tRNAs on improperly translocated ribosomes. Back-translocation proceeds from a post-translocation (POST) complex to a pre-translocation (PRE) complex, thus giving elongation factor G a second chance to translocate the tRNAs correctly. Binds to ribosomes in a GTP-dependent manner. The chain is Elongation factor 4 from Lactobacillus acidophilus (strain ATCC 700396 / NCK56 / N2 / NCFM).